The chain runs to 193 residues: uncharacterized protein (193 aa).

A signal peptide spans 1–14 (MSTSLLFSLSPSSS).

This is an uncharacterized protein from Saccharomyces cerevisiae (strain ATCC 204508 / S288c) (Baker's yeast).